A 625-amino-acid polypeptide reads, in one-letter code: SWR1-complex protein 3 (625 aa).

Disordered regions lie at residues 1–53 (MPAV…EVGN), 194–234 (KELK…KENK), 254–273 (KLKE…MHDP), and 324–434 (NPVN…NAIK). Residues 20–31 (SRTRTRSRRGKR) are compositionally biased toward basic residues. Acidic residues predominate over residues 35 to 53 (DDDDDDDEESDDAYDEVGN). Composition is skewed to basic and acidic residues over residues 194 to 214 (KELK…ERKR) and 221 to 234 (IAKE…KENK). Residues 261 to 270 (NKQGSPSSSM) show a composition bias toward polar residues. The span at 342–352 (KAKDVAEDHRL) shows a compositional bias: basic and acidic residues. A compositionally biased stretch (polar residues) spans 353–364 (NSITLVKSSKTA). Composition is skewed to basic and acidic residues over residues 368 to 388 (PEPK…EAKT) and 396 to 420 (DVKK…KEDN).

It belongs to the SWC3 family. Component of the SWR1 chromatin remodeling complex composed of at least ACT1, ARP4, RVB1, RVB2, ARP6, YAF9, VPS71, VPS72, SWC3, SWC4, SWC5, SWC7 and SWR1, and perhaps BDF1.

The protein localises to the nucleus. Functionally, component of the SWR1 complex which mediates the ATP-dependent exchange of histone H2A for the H2A variant HZT1 leading to transcriptional regulation of selected genes by chromatin remodeling. Involved in chromosome stability. This Saccharomyces cerevisiae (strain ATCC 204508 / S288c) (Baker's yeast) protein is SWR1-complex protein 3 (SWC3).